The primary structure comprises 791 residues: ATP-dependent 6-phosphofructokinase, platelet type (791 aa).

An N-acetylmethionine modification is found at Met-1. The segment at 1–399 (MDNKVSASPR…NLNTYKRLAI (399 aa)) is N-terminal catalytic PFK domain 1. Phosphoserine is present on Ser-6. Position 12 is a phosphoserine; by PKA (Ser-12). A Phosphoserine modification is found at Ser-21. Residues Gly-34, 97 to 98 (RS), and 127 to 130 (GSGS) contribute to the ATP site. A Phosphoserine modification is found at Ser-142. Substrate-binding positions include 173 to 175 (SID), Arg-210, 217 to 219 (MGR), Glu-273, Arg-301, and 307 to 310 (HVQR). The Proton acceptor role is filled by Asp-175. Ser-386 bears the Phosphoserine mark. N6-acetyllysine is present on Lys-395. An interdomain linker region spans residues 400 to 411 (KLPDDKIQKSNC). Positions 412–791 (NVAVINVGAP…RGGPEEPAAI (380 aa)) are C-terminal regulatory PFK domain 2. Arg-481 contributes to the beta-D-fructose 2,6-bisphosphate binding site. Residue Lys-486 is modified to N6-acetyllysine. Beta-D-fructose 2,6-bisphosphate contacts are provided by residues 538 to 542 (TVSNN), Arg-576, 583 to 585 (MGG), and Glu-639. O-linked (GlcNAc) serine glycosylation is present at Ser-540. A Phosphotyrosine modification is found at Tyr-651. Residues Arg-665 and 671–674 (HMQQ) each bind beta-D-fructose 2,6-bisphosphate. Lys-688 is subject to N6-acetyllysine. Arg-744 lines the beta-D-fructose 2,6-bisphosphate pocket.

Belongs to the phosphofructokinase type A (PFKA) family. ATP-dependent PFK group I subfamily. Eukaryotic two domain clade 'E' sub-subfamily. Homo- and heterotetramers. Phosphofructokinase (PFK) enzyme functions as a tetramer composed of different combinations of 3 types of subunits, called PFKM (M), PFKL (L) and PFKP (P). The composition of the PFK tetramer differs according to the tissue type it is present in. The kinetic and regulatory properties of the tetrameric enzyme are dependent on the subunit composition, hence can vary across tissues. Interacts with ATG4B; promoting phosphorylation of ATG4B. It depends on Mg(2+) as a cofactor. GlcNAcylation decreases enzyme activity. Post-translationally, phosphorylation at Ser-386 promotes interaction with ATG4B.

Its subcellular location is the cytoplasm. The enzyme catalyses beta-D-fructose 6-phosphate + ATP = beta-D-fructose 1,6-bisphosphate + ADP + H(+). It participates in carbohydrate degradation; glycolysis; D-glyceraldehyde 3-phosphate and glycerone phosphate from D-glucose: step 3/4. Allosterically activated by ADP, AMP, or fructose 2,6-bisphosphate, and allosterically inhibited by ATP or citrate. In terms of biological role, catalyzes the phosphorylation of D-fructose 6-phosphate to fructose 1,6-bisphosphate by ATP, the first committing step of glycolysis. This Oryctolagus cuniculus (Rabbit) protein is ATP-dependent 6-phosphofructokinase, platelet type (PFKP).